We begin with the raw amino-acid sequence, 484 residues long: Polyamine oxidase 3 (484 aa).

Residues E47, R55, V236, and E423 each coordinate FAD. The Microbody targeting signal signature appears at 482–484; the sequence is SRL.

This sequence belongs to the flavin monoamine oxidase family. The cofactor is FAD. Widely expressed.

The protein localises to the peroxisome. The enzyme catalyses spermine + O2 + H2O = 3-aminopropanal + spermidine + H2O2. It carries out the reaction N(1)-acetylspermine + O2 + H2O = 3-acetamidopropanal + spermidine + H2O2. The catalysed reaction is norspermine + O2 + H2O = norspermidine + 3-aminopropanal + H2O2. It catalyses the reaction spermidine + O2 + H2O = 3-aminopropanal + putrescine + H2O2. The enzyme catalyses thermospermine + O2 + H2O = 3-aminopropanal + spermidine + H2O2. It functions in the pathway amine and polyamine degradation; spermine degradation. It participates in amine and polyamine degradation; spermidine degradation. In terms of biological role, flavoenzyme involved in polyamine back-conversion. Catalyzes the oxidation of the secondary amino group of polyamines, such as spermine, spermidine and their acetyl derivatives. Substrate preference is spermidine &gt; norspermine &gt; thermospermine &gt; N(1)-acetylspermine &gt; spermine. No activity detected when putrescine is used as substrate. Plays an important role in the regulation of polyamine intracellular concentration. The protein is Polyamine oxidase 3 of Oryza sativa subsp. japonica (Rice).